The chain runs to 336 residues: F420-dependent glucose-6-phosphate dehydrogenase (336 aa).

Asp-39 is a binding site for coenzyme F420-(gamma-Glu)n. His-40 functions as the Proton donor in the catalytic mechanism. Residues Thr-76 and 107–108 each bind coenzyme F420-(gamma-Glu)n; that span reads TG. The active-site Proton acceptor is Glu-109. Residues Asn-112, 177 to 178, and 180 to 181 each bind coenzyme F420-(gamma-Glu)n; these read GG and AV. Thr-195, Lys-198, Lys-259, and Arg-283 together coordinate substrate.

The protein belongs to the F420-dependent glucose-6-phosphate dehydrogenase family. Homodimer.

It catalyses the reaction oxidized coenzyme F420-(gamma-L-Glu)(n) + D-glucose 6-phosphate + H(+) = 6-phospho-D-glucono-1,5-lactone + reduced coenzyme F420-(gamma-L-Glu)(n). Functionally, catalyzes the coenzyme F420-dependent oxidation of glucose 6-phosphate (G6P) to 6-phosphogluconolactone. Appears to have a role in resistance to oxidative stress, via its consumption of G6P that serves as a source of reducing power to combat oxidative stress in mycobacteria. More precisely, is likely involved in a F420-dependent anti-oxidant mechanism that protects M.tuberculosis against oxidative stress and bactericidal agents. Is essential for the bioreductive activation of the bicyclic 4-nitroimidazole prodrug PA-824 (nitroimidazo-oxazine) developed for anti-tuberculosis therapy against both replicating and persistent bacteria. It does not interact directly with PA-824 but, rather, provides reduced F420 to the deazaflavin-dependent nitroreductase Ddn, which in turn activates PA-824. The protein is F420-dependent glucose-6-phosphate dehydrogenase (fgd1) of Mycobacterium tuberculosis (strain CDC 1551 / Oshkosh).